Reading from the N-terminus, the 314-residue chain is uncharacterized protein (314 aa).

The protein to M.leprae ML0607.

This is an uncharacterized protein from Mycobacterium bovis (strain ATCC BAA-935 / AF2122/97).